We begin with the raw amino-acid sequence, 577 residues long: Aspartate--tRNA(Asp) ligase (577 aa).

L-aspartate is bound at residue E172. An aspartate region spans residues 196 to 199; the sequence is QLFK. R218 serves as a coordination point for L-aspartate. ATP-binding positions include 218–220 and Q227; that span reads RDE. Residue H438 coordinates L-aspartate. Residue E473 coordinates ATP. R480 provides a ligand contact to L-aspartate. An ATP-binding site is contributed by 525–528; sequence GFDR.

Belongs to the class-II aminoacyl-tRNA synthetase family. Type 1 subfamily. In terms of assembly, homodimer.

Its subcellular location is the cytoplasm. It carries out the reaction tRNA(Asp) + L-aspartate + ATP = L-aspartyl-tRNA(Asp) + AMP + diphosphate. Catalyzes the attachment of L-aspartate to tRNA(Asp) in a two-step reaction: L-aspartate is first activated by ATP to form Asp-AMP and then transferred to the acceptor end of tRNA(Asp). Is specific for tRNA(Asp) since it cannot aspartylate tRNA(Asn). The protein is Aspartate--tRNA(Asp) ligase (aspS1) of Deinococcus radiodurans (strain ATCC 13939 / DSM 20539 / JCM 16871 / CCUG 27074 / LMG 4051 / NBRC 15346 / NCIMB 9279 / VKM B-1422 / R1).